The sequence spans 205 residues: Protein N-terminal glutamine amidohydrolase (205 aa).

Active-site residues include cysteine 20, histidine 74, and aspartate 90.

It belongs to the NTAQ1 family. As to quaternary structure, monomer.

The catalysed reaction is N-terminal L-glutaminyl-[protein] + H2O = N-terminal L-glutamyl-[protein] + NH4(+). Its function is as follows. Mediates the side-chain deamidation of N-terminal glutamine residues to glutamate, an important step in N-end rule pathway of protein degradation. Conversion of the resulting N-terminal glutamine to glutamate renders the protein susceptible to arginylation, polyubiquitination and degradation as specified by the N-end rule. Does not act on substrates with internal or C-terminal glutamine and does not act on non-glutamine residues in any position. This Drosophila melanogaster (Fruit fly) protein is Protein N-terminal glutamine amidohydrolase (tun).